A 28-amino-acid polypeptide reads, in one-letter code: Cyclotide vodo I1 (28 aa).

3 disulfide bridges follow: cysteine 4–cysteine 18, cysteine 8–cysteine 20, and cysteine 13–cysteine 25.

This is a cyclic peptide. In terms of processing, contains 3 disulfide bonds.

Probably participates in a plant defense mechanism. The protein is Cyclotide vodo I1 of Viola odorata (Sweet violet).